The following is a 30-amino-acid chain: Acyl-CoA-binding protein 1 (30 aa).

Basic and acidic residues predominate over residues Ala1–Thr15. The interval Ala1–Gly30 is disordered. One can recognise an ACB domain in the interval Leu2–Gly30.

It belongs to the ACBP family.

It localises to the cytoplasm. Binds medium- and long-chain acyl-CoA esters with very high affinity and may function as an intracellular carrier of acyl-CoA esters. In Digitalis lanata (Grecian foxglove), this protein is Acyl-CoA-binding protein 1.